Reading from the N-terminus, the 1048-residue chain is Cysteine-rich motor neuron 1 protein (1048 aa).

A signal peptide spans 1-46 (MYLAAVSAGRRRPGGDGGGGGGGWHLAAAGWLLLLALLLGQPGTRA). In terms of domain architecture, IGFBP N-terminal spans 47–124 (LVCLPCDESK…EYEVGVCEDE (78 aa)). The Extracellular portion of the chain corresponds to 47–952 (LVCLPCDESK…HPSEDASVSS (906 aa)). 4 disulfide bridges follow: C49/C72, C52/C74, C57/C75, and C63/C78. Residue N83 is glycosylated (N-linked (GlcNAc...) asparagine). Cystine bridges form between C86–C102 and C96–C121. The Cell attachment site signature appears at 326–328 (RGD). VWFC domains follow at residues 346 to 403 (PTCI…PVCE) and 413 to 469 (AGCY…PVCE). Antistasin-like domains lie at 481–510 (CELL…ICQC), 517–544 (CTGL…ICQC), 551–576 (CKPI…ICRC), and 579–604 (CPEM…ICKC). N-linked (GlcNAc...) asparagine glycosylation occurs at N486. VWFC domains are found at residues 618-675 (GSCL…PSCP) and 689-747 (SICH…PQCP). N-linked (GlcNAc...) asparagine glycosylation occurs at N758. VWFC domains follow at residues 763-821 (SYCK…PYCI) and 829-886 (VVCH…PMCP). Residues 904 to 906 (RGD) carry the Cell attachment site motif. The N-linked (GlcNAc...) asparagine glycan is linked to N913. A helical membrane pass occupies residues 953-973 (VALVTVPITIALLVIIVFLLI). Topologically, residues 974-1048 (NQKKQWIPVS…LQADNFYQTV (75 aa)) are cytoplasmic.

The protein localises to the membrane. Its function is as follows. May play a role in CNS development by interacting with growth factors implicated in motor neuron differentiation and survival. This Gallus gallus (Chicken) protein is Cysteine-rich motor neuron 1 protein (CRIM1).